The primary structure comprises 501 residues: Zinc finger and SCAN domain-containing protein 12 (501 aa).

Residues K20 and K26 each participate in a glycyl lysine isopeptide (Lys-Gly) (interchain with G-Cter in SUMO2) cross-link. An SCAN box domain is found at 51–132; the sequence is QFCYQETSGP…DLERELDELG (82 aa). A disordered region spans residues 175–194; the sequence is REAQEEQVSGVETGNEPRNV. Over residues 180 to 194 the composition is skewed to polar residues; sequence EQVSGVETGNEPRNV. K197 is covalently cross-linked (Glycyl lysine isopeptide (Lys-Gly) (interchain with G-Cter in SUMO2)). Residues 223–255 form a disordered region; the sequence is EAHNPGEESSGISHEDSQPLRNENGVNSPANSE. A compositionally biased stretch (polar residues) spans 241-253; that stretch reads PLRNENGVNSPAN. 6 consecutive C2H2-type zinc fingers follow at residues 269–291, 297–319, 325–347, 353–375, 381–403, and 409–431; these read HGCD…KRVH, YKCE…KVVH, YKCN…QRLH, YHCN…LKSH, YQCL…QGVH, and YECN…QETH. The segment at 429-450 is disordered; that stretch reads ETHHKEKPFTQSGPIQQQRNHT. Over residues 437-447 the composition is skewed to polar residues; it reads FTQSGPIQQQR. The segment at 455–477 adopts a C2H2-type 7 zinc-finger fold; it reads YKCSVCGKAFIQKISLIEHEQIH. A C2H2-type 8; degenerate zinc finger spans residues 483–501; sequence YKCAEGGKAFIQMSELTEH.

It belongs to the krueppel C2H2-type zinc-finger protein family. As to expression, testis specific.

It localises to the nucleus. May be involved in transcriptional regulation. This Mus musculus (Mouse) protein is Zinc finger and SCAN domain-containing protein 12 (Zscan12).